The sequence spans 609 residues: Threonine--tRNA ligase (609 aa).

The segment at 1–143 (MRVLYLHTER…SFKPGDSRAE (143 aa)) is editing domain. 2 catalytic regions span residues 195 to 491 (PRYL…PRLP) and 196 to 491 (RYLE…PRLP). Positions 288, 339, and 460 each coordinate Zn(2+).

The protein belongs to the class-II aminoacyl-tRNA synthetase family. In terms of assembly, homodimer. The cofactor is Zn(2+).

It localises to the cytoplasm. The enzyme catalyses tRNA(Thr) + L-threonine + ATP = L-threonyl-tRNA(Thr) + AMP + diphosphate + H(+). Functionally, catalyzes the attachment of threonine to tRNA(Thr) in a two-step reaction: L-threonine is first activated by ATP to form Thr-AMP and then transferred to the acceptor end of tRNA(Thr). Also edits incorrectly charged L-seryl-tRNA(Thr). The protein is Threonine--tRNA ligase of Pyrobaculum neutrophilum (strain DSM 2338 / JCM 9278 / NBRC 100436 / V24Sta) (Thermoproteus neutrophilus).